Consider the following 916-residue polypeptide: Phosphoenolpyruvate carboxylase (916 aa).

Residues histidine 144 and lysine 578 contribute to the active site.

It belongs to the PEPCase type 1 family. The cofactor is Mg(2+).

The enzyme catalyses oxaloacetate + phosphate = phosphoenolpyruvate + hydrogencarbonate. Functionally, forms oxaloacetate, a four-carbon dicarboxylic acid source for the tricarboxylic acid cycle. This chain is Phosphoenolpyruvate carboxylase, found in Aromatoleum aromaticum (strain DSM 19018 / LMG 30748 / EbN1) (Azoarcus sp. (strain EbN1)).